A 268-amino-acid chain; its full sequence is Indole-3-glycerol phosphate synthase (268 aa).

This sequence belongs to the TrpC family.

It carries out the reaction 1-(2-carboxyphenylamino)-1-deoxy-D-ribulose 5-phosphate + H(+) = (1S,2R)-1-C-(indol-3-yl)glycerol 3-phosphate + CO2 + H2O. It functions in the pathway amino-acid biosynthesis; L-tryptophan biosynthesis; L-tryptophan from chorismate: step 4/5. The polypeptide is Indole-3-glycerol phosphate synthase (Acinetobacter baumannii (strain AB0057)).